Consider the following 408-residue polypeptide: Elongation factor Tu, chloroplastic (408 aa).

The tr-type G domain occupies 10 to 213 (KPHVNIGTIG…KVDEYIPTPE (204 aa)). The interval 19–26 (GHVDHGKT) is G1. 19–26 (GHVDHGKT) is a GTP binding site. Mg(2+) is bound at residue threonine 26. A G2 region spans residues 59–63 (GITIN). The segment at 80-83 (DCPG) is G3. GTP-binding positions include 80-84 (DCPGH) and 135-138 (NKAD). Positions 135 to 138 (NKAD) are G4. Positions 173 to 175 (SAL) are G5.

This sequence belongs to the TRAFAC class translation factor GTPase superfamily. Classic translation factor GTPase family. EF-Tu/EF-1A subfamily.

Its subcellular location is the plastid. The protein resides in the chloroplast. It carries out the reaction GTP + H2O = GDP + phosphate + H(+). Its function is as follows. GTP hydrolase that promotes the GTP-dependent binding of aminoacyl-tRNA to the A-site of ribosomes during protein biosynthesis. This chain is Elongation factor Tu, chloroplastic (tufA), found in Guillardia theta (Cryptophyte).